We begin with the raw amino-acid sequence, 165 residues long: Phosphopantetheine adenylyltransferase (165 aa).

Residue S10 participates in substrate binding. Residues 10–11 (SF) and H18 contribute to the ATP site. Substrate is bound by residues K42, T79, and R93. ATP contacts are provided by residues 94 to 96 (GLR), E104, and 129 to 135 (VRPITAT).

It belongs to the bacterial CoaD family. In terms of assembly, homohexamer. The cofactor is Mg(2+).

It localises to the cytoplasm. The enzyme catalyses (R)-4'-phosphopantetheine + ATP + H(+) = 3'-dephospho-CoA + diphosphate. It functions in the pathway cofactor biosynthesis; coenzyme A biosynthesis; CoA from (R)-pantothenate: step 4/5. Its function is as follows. Reversibly transfers an adenylyl group from ATP to 4'-phosphopantetheine, yielding dephospho-CoA (dPCoA) and pyrophosphate. This is Phosphopantetheine adenylyltransferase from Rhodopseudomonas palustris (strain BisA53).